A 69-amino-acid chain; its full sequence is MMSKLRVLLIICLLLFPLTAVPLDGDQPADRPAERTQDDISSEHHPMFDAVRGCCPALACAMGCRPCCG.

Positions 1–20 are cleaved as a signal peptide; it reads MMSKLRVLLIICLLLFPLTA. Residues 21-52 constitute a propeptide that is removed on maturation; it reads VPLDGDQPADRPAERTQDDISSEHHPMFDAVR. A disordered region spans residues 22–43; it reads PLDGDQPADRPAERTQDDISSE. Basic and acidic residues predominate over residues 28–43; that stretch reads PADRPAERTQDDISSE. Pro66 is modified (4-hydroxyproline; partial; in minor form). Cys68 is subject to Cysteine amide.

This sequence belongs to the conotoxin M family. In terms of processing, mostly non-hydroxylated. Contains 3 disulfide bonds. As to expression, expressed by the venom duct.

The protein localises to the secreted. Functionally, mu-conotoxins block voltage-gated sodium channels (Nav). This Conus amadis (Amadis cone) protein is Mu-conotoxin-like Am3.1.